Here is a 320-residue protein sequence, read N- to C-terminus: ATP-dependent 6-phosphofructokinase (320 aa).

Position 12 (Gly12) interacts with ATP. 22 to 26 (RGVVR) is an ADP binding site. Residues 73–74 (RF) and 103–106 (GDGS) contribute to the ATP site. Mg(2+) is bound at residue Asp104. 126-128 (TID) contributes to the substrate binding site. Asp128 functions as the Proton acceptor in the catalytic mechanism. Arg155 provides a ligand contact to ADP. Residues Arg163 and 170–172 (MGR) each bind substrate. Residues 186–188 (GCE), Lys212, and 214–216 (KKH) each bind ADP. Substrate-binding positions include Glu223, Arg244, and 250–253 (HIQR).

This sequence belongs to the phosphofructokinase type A (PFKA) family. ATP-dependent PFK group I subfamily. Prokaryotic clade 'B1' sub-subfamily. In terms of assembly, homotetramer. Mg(2+) is required as a cofactor.

It is found in the cytoplasm. It carries out the reaction beta-D-fructose 6-phosphate + ATP = beta-D-fructose 1,6-bisphosphate + ADP + H(+). It functions in the pathway carbohydrate degradation; glycolysis; D-glyceraldehyde 3-phosphate and glycerone phosphate from D-glucose: step 3/4. With respect to regulation, allosterically activated by ADP and other diphosphonucleosides, and allosterically inhibited by phosphoenolpyruvate. Catalyzes the phosphorylation of D-fructose 6-phosphate to fructose 1,6-bisphosphate by ATP, the first committing step of glycolysis. This Blochmanniella floridana protein is ATP-dependent 6-phosphofructokinase.